The sequence spans 382 residues: MPDSLPSDSVGLVSPKTIHFDKPLELACGQSLESYDLVVETYGKLNADASNAVLICHALSGHHHAAGYHSLDDRKPGWWDSCIGPGKPIDTNRFFVVSLNNLGGCHGSTGPNSNNPETGKPYGPDFPVVTVADWVASQARLADHLGIQQWAAVVGGSLGGMQALQWSLDYPDRLRHSVVIASTPRLTAQNIAFNEVARQAITSDREFFEGRYYDENLVPKRGLMLARMVGHITYLSDASMGEKFGRELREEAYKFGFDAEFQVESYLRYQGERFSETFDANTYLLMTRALDYFDPAYDFGGDLSKALAPAQCEYLVLSFSTDWRFSPARSEEMVNAMISARKRVSYAEIDAPWGHDAFLIPTPRYTDIFTAYMDRVAREVGA.

In terms of domain architecture, AB hydrolase-1 spans 51 to 359 (NAVLICHALS…DAPWGHDAFL (309 aa)). Serine 157 (nucleophile) is an active-site residue. Arginine 227 contributes to the substrate binding site. Catalysis depends on residues aspartate 322 and histidine 355. Position 356 (aspartate 356) interacts with substrate.

The protein belongs to the AB hydrolase superfamily. MetX family. As to quaternary structure, homodimer.

It is found in the cytoplasm. The catalysed reaction is L-homoserine + succinyl-CoA = O-succinyl-L-homoserine + CoA. The protein operates within amino-acid biosynthesis; L-methionine biosynthesis via de novo pathway; O-succinyl-L-homoserine from L-homoserine: step 1/1. Transfers a succinyl group from succinyl-CoA to L-homoserine, forming succinyl-L-homoserine. The protein is Homoserine O-succinyltransferase of Marinobacter nauticus (strain ATCC 700491 / DSM 11845 / VT8) (Marinobacter aquaeolei).